Here is a 343-residue protein sequence, read N- to C-terminus: Methionine import ATP-binding protein MetN 2 (343 aa).

Residues 2–241 form the ABC transporter domain; that stretch reads IEFKDVTKTF…PQQAVTKRFV (240 aa). 38–45 serves as a coordination point for ATP; sequence GYSGAGKS.

The protein belongs to the ABC transporter superfamily. Methionine importer (TC 3.A.1.24) family. The complex is composed of two ATP-binding proteins (MetN), two transmembrane proteins (MetI) and a solute-binding protein (MetQ).

The protein localises to the cell membrane. It carries out the reaction L-methionine(out) + ATP + H2O = L-methionine(in) + ADP + phosphate + H(+). It catalyses the reaction D-methionine(out) + ATP + H2O = D-methionine(in) + ADP + phosphate + H(+). Its function is as follows. Part of the ABC transporter complex MetNIQ involved in methionine import. Responsible for energy coupling to the transport system. This Lactiplantibacillus plantarum (strain ATCC BAA-793 / NCIMB 8826 / WCFS1) (Lactobacillus plantarum) protein is Methionine import ATP-binding protein MetN 2.